The primary structure comprises 439 residues: Exodeoxyribonuclease 7 large subunit (439 aa).

The protein belongs to the XseA family. As to quaternary structure, heterooligomer composed of large and small subunits.

It is found in the cytoplasm. It catalyses the reaction Exonucleolytic cleavage in either 5'- to 3'- or 3'- to 5'-direction to yield nucleoside 5'-phosphates.. Its function is as follows. Bidirectionally degrades single-stranded DNA into large acid-insoluble oligonucleotides, which are then degraded further into small acid-soluble oligonucleotides. The chain is Exodeoxyribonuclease 7 large subunit from Haemophilus influenzae (strain 86-028NP).